Consider the following 102-residue polypeptide: Small ribosomal subunit protein eS24 (102 aa).

This sequence belongs to the eukaryotic ribosomal protein eS24 family.

The polypeptide is Small ribosomal subunit protein eS24 (Methanococcus maripaludis (strain C5 / ATCC BAA-1333)).